A 718-amino-acid chain; its full sequence is F-box/LRR-repeat protein 18 (718 aa).

The 48-residue stretch at 25 to 72 (GVHLLGFSDEILLHILSHVPSTDLILNVRRTCRKLAALCLDKSLIHTV) folds into the F-box domain. 12 LRR repeats span residues 77 to 103 (DYQA…SMAG), 104 to 128 (CYWL…NLSG), 129 to 153 (CHLT…AIDV), 177 to 201 (KQTL…LLYF), 324 to 352 (CTLS…NLSG), 367 to 392 (EDDI…NLSA), 393 to 422 (AHHH…SLPV), 468 to 492 (CPQP…ELIG), 516 to 540 (AQSV…TLAQ), 542 to 567 (PSVL…SLAN), 572 to 597 (GKVV…RLEQ), and 599 to 623 (YFSA…CLVS).

In terms of assembly, directly interacts with SKP1 and CUL1.

Its function is as follows. Substrate-recognition component of the SCF (SKP1-CUL1-F-box protein)-type E3 ubiquitin ligase complex. The polypeptide is F-box/LRR-repeat protein 18 (FBXL18) (Homo sapiens (Human)).